The primary structure comprises 31 residues: Cyclotide cter-J (31 aa).

The cyclopeptide (Gly-Asp) cross-link spans 1-31 (GTVPCGESCVFIPCITGIAGCSCKNKVCYID). Intrachain disulfides connect C5/C21, C9/C23, and C14/C28.

Post-translationally, contains 3 disulfide bonds. In terms of processing, this is a cyclic peptide.

Its function is as follows. Probably participates in a plant defense mechanism. The sequence is that of Cyclotide cter-J from Clitoria ternatea (Butterfly pea).